Consider the following 469-residue polypeptide: Programmed cell death protein 4 (469 aa).

Methionine 1 carries the post-translational modification N-acetylmethionine. Disordered stretches follow at residues methionine 1–asparagine 30 and lysine 58–glycine 128. Positions glutamine 7–leucine 23 are enriched in polar residues. Serine 25 bears the Phosphoserine mark. A Nuclear localization signal motif is present at residues lysine 58 to arginine 64. Serine 67 carries the post-translational modification Phosphoserine; by PKB and RPS6KB1. Phosphoserine occurs at positions 68, 71, 76, 78, and 94. The Phosphodegron motif lies at aspartate 70–serine 76. A compositionally biased stretch (gly residues) spans lysine 114–glycine 125. At tyrosine 152 the chain carries Phosphotyrosine. The region spanning alanine 163–glycine 284 is the MI 1 domain. Phosphoserine occurs at positions 313 and 317. The MI 2 domain occupies histidine 326–serine 449. The short motif at proline 448–arginine 454 is the Nuclear localization signal element. Serine 457 carries the post-translational modification Phosphoserine.

Belongs to the PDCD4 family. As to quaternary structure, interacts (via MI domains) with EIF4A2. Interacts (via MI domains) with EIF4A1 (via N-terminal domain). Heterotrimer with EIF4A1; one molecule of PDCD4 binds two molecules of EIF4A1. Interacts with EIF4G1. May form a complex with EIF4A1 and EIF4G1. The interaction between PDCD4 and EIF4A1 interferes with the interaction between EIF4A1 and EIF4G. When phosphorylated, interacts with BTRC and FBXW11. Polyubiquitinated, leading to its proteasomal degradation. Rapidly degraded in response to mitogens. Phosphorylation of the phosphodegron promotes interaction with BTRC and proteasomal degradation. Post-translationally, phosphorylated at Ser-67 by RPS6KB1 in response to mitogens; phosphorylation promotes proteasomal degradation of PDCD4.

The protein resides in the nucleus. The protein localises to the cytoplasm. Its function is as follows. Inhibits translation initiation and cap-dependent translation. May excert its function by hindering the interaction between EIF4A1 and EIF4G. Inhibits the helicase activity of EIF4A. Modulates the activation of JUN kinase. Down-regulates the expression of MAP4K1, thus inhibiting events important in driving invasion, namely, MAPK85 activation and consequent JUN-dependent transcription. May play a role in apoptosis. Tumor suppressor. Inhibits tumor promoter-induced neoplastic transformation. Binds RNA. The polypeptide is Programmed cell death protein 4 (Pdcd4) (Rattus norvegicus (Rat)).